The sequence spans 136 residues: MFKEFKEFALKGNMIDLAIGVIIGGAFGSLVNSIVNDIFMPIIGLITGGIDFSNMFIQLAGEKQATLSAAKAAGATISYGHFITLLINFLIIAWVLFFFVKAMNKMRRKEEGESPNKTSSEEQLLTEIRDLLAKKK.

3 helical membrane-spanning segments follow: residues I15 to V35, I38 to Q58, and G80 to V100.

It belongs to the MscL family. Homopentamer.

It localises to the cell inner membrane. Channel that opens in response to stretch forces in the membrane lipid bilayer. May participate in the regulation of osmotic pressure changes within the cell. The polypeptide is Large-conductance mechanosensitive channel (Bartonella tribocorum (strain CIP 105476 / IBS 506)).